Reading from the N-terminus, the 462-residue chain is Protein phosphatase 1M (462 aa).

Basic residues predominate over residues M1 to F10. A disordered region spans residues M1–T66. The region spanning E100–L452 is the PPM-type phosphatase domain. Mn(2+) is bound by residues D127 and G128.

The protein belongs to the PP2C family. Mg(2+) serves as cofactor. It depends on Mn(2+) as a cofactor. As to expression, widely expressed with highest levels in testis and lower levels in lung, kidney and brain.

The protein resides in the nucleus. The enzyme catalyses O-phospho-L-seryl-[protein] + H2O = L-seryl-[protein] + phosphate. It carries out the reaction O-phospho-L-threonyl-[protein] + H2O = L-threonyl-[protein] + phosphate. In Mus musculus (Mouse), this protein is Protein phosphatase 1M.